The following is a 272-amino-acid chain: Proteasome subunit beta type-5 (272 aa).

Positions 1–55 are cleaved as a propeptide — removed in mature form; it reads MKLDTSGLESTAPIFRRSDFVFDGLQMTPSFDLPNPTDFDGFQKEAVQMVKPAKG. Residue Thr-56 is the Nucleophile of the active site.

Belongs to the peptidase T1B family. As to quaternary structure, the 26S proteasome consists of a 20S proteasome core and two 19S regulatory subunits. The 20S proteasome core is composed of 28 subunits that are arranged in four stacked rings, resulting in a barrel-shaped structure. The two end rings are each formed by seven alpha subunits, and the two central rings are each formed by seven beta subunits. The catalytic chamber with the active sites is on the inside of the barrel.

It is found in the cytoplasm. The protein resides in the nucleus. It carries out the reaction Cleavage of peptide bonds with very broad specificity.. In terms of biological role, the proteasome is a multicatalytic proteinase complex which is characterized by its ability to cleave peptides with Arg, Phe, Tyr, Leu, and Glu adjacent to the leaving group at neutral or slightly basic pH. The proteasome has an ATP-dependent proteolytic activity. The polypeptide is Proteasome subunit beta type-5 (Spinacia oleracea (Spinach)).